The primary structure comprises 284 residues: uncharacterized protein (284 aa).

Positions 1–20 (MLHNIQSILQFLLFVSSVQA) are cleaved as a signal peptide. One can recognise an Apple domain in the interval 38–121 (CFEFKKNYWI…FTVNFFRNIC (84 aa)). Cystine bridges form between C38–C121, C63–C89, and C67–C77. N-linked (GlcNAc...) asparagine glycosylation is present at N256. The chain crosses the membrane as a helical span at residues 264–284 (SSTGLKFTTGLLIILVVFLFL).

It is found in the membrane. This is an uncharacterized protein from Caenorhabditis elegans.